We begin with the raw amino-acid sequence, 161 residues long: MSVLKQLSIFTDGSCLGNPGPGGYGVVMKYKAHTKELSDGFALTTNNRMELLAPIIALEALKVPCKIILTSDSQYMRQGITQWIHGWKKKNWITSTKQPVKNVDLWKRLDAATQSHEIDWHWVKGHAGHVENERCDTLARVAAEAKPTQEDLGYQPSVSSS.

An RNase H type-1 domain is found at 3 to 144; the sequence is VLKQLSIFTD…CDTLARVAAE (142 aa). Mg(2+)-binding residues include Asp-12, Glu-50, Asp-72, and Asp-136.

The protein belongs to the RNase H family. In terms of assembly, monomer. Mg(2+) is required as a cofactor.

The protein localises to the cytoplasm. It catalyses the reaction Endonucleolytic cleavage to 5'-phosphomonoester.. Endonuclease that specifically degrades the RNA of RNA-DNA hybrids. This is Ribonuclease H from Shewanella woodyi (strain ATCC 51908 / MS32).